A 931-amino-acid chain; its full sequence is Valine--tRNA ligase (931 aa).

The 'HIGH' region signature appears at 43 to 53 (PNVTGALHIGH). The segment at 351-370 (IPHTDKDGNAHDAEPRTIQT) is disordered. Over residues 353–365 (HTDKDGNAHDAEP) the composition is skewed to basic and acidic residues. A 'KMSKS' region motif is present at residues 552–556 (KMSKS). Lys555 lines the ATP pocket. Positions 691–717 (LQGRGLGEGDEAVPAPADGPLSPALSP) are disordered. Positions 864 to 930 (VIDIAAERER…DRLSAALARL (67 aa)) form a coiled coil.

This sequence belongs to the class-I aminoacyl-tRNA synthetase family. ValS type 1 subfamily. In terms of assembly, monomer.

It localises to the cytoplasm. The enzyme catalyses tRNA(Val) + L-valine + ATP = L-valyl-tRNA(Val) + AMP + diphosphate. Functionally, catalyzes the attachment of valine to tRNA(Val). As ValRS can inadvertently accommodate and process structurally similar amino acids such as threonine, to avoid such errors, it has a 'posttransfer' editing activity that hydrolyzes mischarged Thr-tRNA(Val) in a tRNA-dependent manner. This Sphingopyxis alaskensis (strain DSM 13593 / LMG 18877 / RB2256) (Sphingomonas alaskensis) protein is Valine--tRNA ligase.